Consider the following 445-residue polypeptide: 3-phosphoshikimate 1-carboxyvinyltransferase (445 aa).

The 3-phosphoshikimate site is built by Lys-28, Ser-29, and Arg-33. Residue Lys-28 coordinates phosphoenolpyruvate. Residues Gly-101 and Arg-129 each coordinate phosphoenolpyruvate. 4 residues coordinate 3-phosphoshikimate: Ser-175, Gln-177, Asp-328, and Lys-355. Residue Gln-177 coordinates phosphoenolpyruvate. Asp-328 serves as the catalytic Proton acceptor. Positions 359 and 402 each coordinate phosphoenolpyruvate.

Belongs to the EPSP synthase family. Monomer.

The protein localises to the cytoplasm. The catalysed reaction is 3-phosphoshikimate + phosphoenolpyruvate = 5-O-(1-carboxyvinyl)-3-phosphoshikimate + phosphate. It functions in the pathway metabolic intermediate biosynthesis; chorismate biosynthesis; chorismate from D-erythrose 4-phosphate and phosphoenolpyruvate: step 6/7. Functionally, catalyzes the transfer of the enolpyruvyl moiety of phosphoenolpyruvate (PEP) to the 5-hydroxyl of shikimate-3-phosphate (S3P) to produce enolpyruvyl shikimate-3-phosphate and inorganic phosphate. The protein is 3-phosphoshikimate 1-carboxyvinyltransferase of Rhodopseudomonas palustris (strain BisA53).